The sequence spans 311 residues: ATP synthase gamma chain (311 aa).

The protein belongs to the ATPase gamma chain family. F-type ATPases have 2 components, CF(1) - the catalytic core - and CF(0) - the membrane proton channel. CF(1) has five subunits: alpha(3), beta(3), gamma(1), delta(1), epsilon(1). CF(0) has three main subunits: a, b and c.

Its subcellular location is the cell membrane. Functionally, produces ATP from ADP in the presence of a proton gradient across the membrane. The gamma chain is believed to be important in regulating ATPase activity and the flow of protons through the CF(0) complex. This Limosilactobacillus fermentum (strain NBRC 3956 / LMG 18251) (Lactobacillus fermentum) protein is ATP synthase gamma chain.